The primary structure comprises 569 residues: MTELAGASSSCCHRPAGRGAMQSVLHHFQRLRGREGGSHFINTSSPRGEAKMSITSDEVNFLVYRYLQESGFSHSAFTFGIESHISQSNINGTLVPPAALISILQKGLQYVEAEISINEDGTVFDGRPIESLSLIDAVMPDVVQTRQRAFREKLAQQQASAAAAAAAATTSASVSQQNPSKNREATVNGEENRAHSVNNHAKPMEIDGEVDIPSSKATVLRGHESEVFICAWNPVSDLLASGSGDSTARIWNLNENSNGGSTQLVLRHCIREGGHDVPSNKDVTSLDWNTNGTLLATGSYDGFARIWTEDGNLASTLGQHKGPIFALKWNRKGNYILSAGVDKTTIIWDAHTGEAKQQFPFHSAPALDVDWQNNMTFASCSTDMCIHVCRLGCDRPVKTFQGHTNEVNAIKWDPSGMLLASCSDDMTLKIWSMKQEVCIHDLQAHNKEIYTIKWSPTGPATSNPNSNIMLASASFDSTVRLWDIERGVCTHTLTKHQEPVYSVAFSPDGRYLASGSFDKCVHIWNTQSGNLVHSYRGTGGIFEVCWNARGDKVGASASDGSVCVLDLRK.

The region spanning T55–Q87 is the LisH domain. The F-box-like domain maps to G92–A137. K153 is subject to N6-acetyllysine. A disordered region spans residues T170 to H195. S175 is subject to Phosphoserine. WD repeat units lie at residues G222–S261, P278–L317, Q319–Q358, F361–Q401, G402–D441, A444–T492, K495–S534, and R536–R568. K332 participates in a covalent cross-link: Glycyl lysine isopeptide (Lys-Gly) (interchain with G-Cter in SUMO2).

The protein belongs to the WD repeat EBI family. As to quaternary structure, homotetramer; dimer of dimers. Component of the N-Cor repressor complex, at least composed of NCOR1, NCOR2, HDAC3, TBL1X, TBL1R, CORO2A and GPS2. Interacts with GPS2 (when sumoylated); leading to protect GPS2 against degradation by the proteasome. Component of a E3 ubiquitin ligase complex containing UBE2D1, SIAH1, CACYBP/SIP, SKP1, APC and TBL1X. Probably part of other corepressor complexes, that do not contain NCOR1 and NCOR2. Interacts with histones H2B, H3a and H4. Interacts with MECP2; recruits TBL1X to the heterochromatin foci. Interacts with USP44.

The protein resides in the nucleus. Functionally, F-box-like protein involved in the recruitment of the ubiquitin/19S proteasome complex to nuclear receptor-regulated transcription units. Plays an essential role in transcription activation mediated by nuclear receptors. Probably acts as integral component of corepressor complexes that mediates the recruitment of the 19S proteasome complex, leading to the subsequent proteasomal degradation of transcription repressor complexes, thereby allowing cofactor exchange. The polypeptide is F-box-like/WD repeat-containing protein TBL1X (TBL1X) (Macaca fascicularis (Crab-eating macaque)).